Consider the following 325-residue polypeptide: Chain length determinant protein (325 aa).

At 1–31 the chain is on the cytoplasmic side; it reads MRVENNNVSGQNLDPEQIDLIDLLVQLWRGK. A helical membrane pass occupies residues 32 to 52; the sequence is MTIIISVIVAIVLAIGYLVVA. The Periplasmic portion of the chain corresponds to 53–294; the sequence is KEKWTSTAIV…LPIRRDSPKK (242 aa). The helical transmembrane segment at 295 to 315 threads the bilayer; the sequence is AITLILAVLLGGMVGAGIVLG. The Cytoplasmic portion of the chain corresponds to 316–325; it reads RNALRNYNAK.

It belongs to the WzzB/Cld/Rol family.

It is found in the cell inner membrane. Its pathway is bacterial outer membrane biogenesis; lipopolysaccharide biosynthesis. Confers a modal distribution of chain length on the O-antigen component of lipopolysaccharide (LPS). Gives rise to a reduced number of short chain molecules and increases in numbers of longer molecules, with a modal value of 13 (in strain O111/M92) and of 17 (in strain K12). This chain is Chain length determinant protein (wzzB), found in Escherichia coli.